An 84-amino-acid chain; its full sequence is Anthracycline acyl carrier protein DauA (84 aa).

The Carrier domain occupies 3 to 80 (ELSLAELREI…SMLIFVNERL (78 aa)). The residue at position 40 (serine 40) is an O-(pantetheine 4'-phosphoryl)serine.

Its pathway is antibiotic biosynthesis; daunorubicin biosynthesis. It functions in the pathway antibiotic biosynthesis; carminomycin biosynthesis. The protein operates within antibiotic biosynthesis; rhodomycin biosynthesis. It participates in antibiotic biosynthesis; aclacinomycin biosynthesis. Involved in the biosynthesis of aklanonate which is an important precursor common to the formation of the clinically significant anthracyclines such as carminomycin, daunorubicin (daunomycin), rhodomycin, aclacinomycin T (aklavin) and aclacinomycin A (aclarubicin). These compounds are aromatic polyketide antibiotics that exhibit high cytotoxicity and are widely applied in the chemotherapy of a variety of cancers. The protein is Anthracycline acyl carrier protein DauA (dauA) of Streptomyces sp. (strain C5).